We begin with the raw amino-acid sequence, 106 residues long: UPF0145 protein Athe_0545 (106 aa).

This sequence belongs to the UPF0145 family.

The polypeptide is UPF0145 protein Athe_0545 (Caldicellulosiruptor bescii (strain ATCC BAA-1888 / DSM 6725 / KCTC 15123 / Z-1320) (Anaerocellum thermophilum)).